Here is a 379-residue protein sequence, read N- to C-terminus: Protein-glutamate methylesterase/protein-glutamine glutaminase (379 aa).

Residues 4–121 (KILVVDDSIF…AANRQDAVAL (118 aa)) form the Response regulatory domain. Asp55 is modified (4-aspartylphosphate). Residues 186 to 379 (SGKKYRCLAI…FESHILKEMA (194 aa)) form the CheB-type methylesterase domain. Residues Ser198, His225, and Asp323 contribute to the active site.

Belongs to the CheB family. In terms of processing, phosphorylated by CheA. Phosphorylation of the N-terminal regulatory domain activates the methylesterase activity.

Its subcellular location is the cytoplasm. The enzyme catalyses [protein]-L-glutamate 5-O-methyl ester + H2O = L-glutamyl-[protein] + methanol + H(+). It catalyses the reaction L-glutaminyl-[protein] + H2O = L-glutamyl-[protein] + NH4(+). Its function is as follows. Involved in chemotaxis. Part of a chemotaxis signal transduction system that modulates chemotaxis in response to various stimuli. Catalyzes the demethylation of specific methylglutamate residues introduced into the chemoreceptors (methyl-accepting chemotaxis proteins or MCP) by CheR. Also mediates the irreversible deamidation of specific glutamine residues to glutamic acid. This is Protein-glutamate methylesterase/protein-glutamine glutaminase from Pseudoalteromonas atlantica (strain T6c / ATCC BAA-1087).